A 224-amino-acid chain; its full sequence is Ribose-5-phosphate isomerase A (224 aa).

Substrate contacts are provided by residues 26–29, 82–85, and 95–98; these read TGST, DGAD, and KGGG. Glutamate 104 acts as the Proton acceptor in catalysis. Position 122 (lysine 122) interacts with substrate.

The protein belongs to the ribose 5-phosphate isomerase family. Homodimer.

The enzyme catalyses aldehydo-D-ribose 5-phosphate = D-ribulose 5-phosphate. The protein operates within carbohydrate degradation; pentose phosphate pathway; D-ribose 5-phosphate from D-ribulose 5-phosphate (non-oxidative stage): step 1/1. Catalyzes the reversible conversion of ribose-5-phosphate to ribulose 5-phosphate. The protein is Ribose-5-phosphate isomerase A of Lactococcus lactis subsp. cremoris (strain SK11).